A 259-amino-acid polypeptide reads, in one-letter code: UPF0246 protein VF_2109 (259 aa).

The protein belongs to the UPF0246 family.

This is UPF0246 protein VF_2109 from Aliivibrio fischeri (strain ATCC 700601 / ES114) (Vibrio fischeri).